Reading from the N-terminus, the 342-residue chain is Cytoplasmic tRNA 2-thiolation protein 1 (342 aa).

Belongs to the TtcA family. CTU1/NCS6/ATPBD3 subfamily.

The protein resides in the cytoplasm. It functions in the pathway tRNA modification; 5-methoxycarbonylmethyl-2-thiouridine-tRNA biosynthesis. Plays a central role in 2-thiolation of mcm(5)S(2)U at tRNA wobble positions of tRNA(Lys), tRNA(Glu) and tRNA(Gln). Directly binds tRNAs and probably acts by catalyzing adenylation of tRNAs, an intermediate required for 2-thiolation. It is unclear whether it acts as a sulfurtransferase that transfers sulfur from thiocarboxylated URM1 onto the uridine of tRNAs at wobble position. This chain is Cytoplasmic tRNA 2-thiolation protein 1, found in Anopheles gambiae (African malaria mosquito).